A 473-amino-acid chain; its full sequence is H(+)/Cl(-) exchange transporter ClcA (473 aa).

The Cytoplasmic segment spans residues 1–32 (MKTDTPSLETPQAARLRRRQLIRQLLERDKTP). A helical transmembrane segment spans residues 33–69 (LAILFMAAVVGTLVGLAAVAFDKGVAWLQNQRMGALV). Residues 70 to 76 (HTADNYP) are Periplasmic-facing. Residues 77–100 (LLLTVAFLCSAVLAMFGYFLVRKY) form a helical membrane-spanning segment. Residues 106 to 110 (GSGIP) carry the Selectivity filter part_1 motif. Ser107 contacts chloride. An intramembrane region (helical) is located at residues 109-116 (IPEIEGAL). Residues 117–123 (EDQRPVR) lie on the Cytoplasmic side of the membrane. The next 2 membrane-spanning stretches (helical) occupy residues 124–141 (WWRV…TLGG) and 148–166 (EGPT…LDIF). The Selectivity filter part_2 signature appears at 146-150 (GREGP). The Cytoplasmic portion of the chain corresponds to 167 to 176 (RLKGDEARHT). 2 intramembrane regions (helical) span residues 177-189 (LLAT…LAAA) and 193-201 (PLAGILFII). Residues 202–214 (EEMRPQFRYTLIS) lie on the Cytoplasmic side of the membrane. Residues 215 to 232 (IKAVFIGVIMSTIMYRIF) traverse the membrane as a helical segment. Residues 233–252 (NHEVALIDVGKLSDAPLNTL) are Periplasmic-facing. Residues 253–281 (WLYLILGIIFGIFGPIFNKWVLGMQDLLH) form a helical membrane-spanning segment. The Cytoplasmic portion of the chain corresponds to 282 to 287 (RVHGGN). The helical transmembrane segment at 288–309 (ITKWILMGGAIGGLCGLLGFVA) threads the bilayer. The Periplasmic portion of the chain corresponds to 310 to 329 (PATSGGGFNLIPIATAGNFS). Helical transmembrane passes span 330-349 (MGML…LCFS) and 355-376 (GIFA…MVAV). Residues 355–359 (GIFAP) carry the Selectivity filter part_3 motif. Ile356 and Phe357 together coordinate chloride. Over 377–386 (ELFPQYHLEA) the chain is Periplasmic. The segment at residues 387–401 (GTFAIAGMGALLAAS) is an intramembrane region (helical). The segment at residues 402-404 (IRA) is an intramembrane region (note=Loop between two helices). Residues 405-416 (PLTGIILVLEMT) constitute an intramembrane region (helical). Positions 417–421 (DNYQL) form an intramembrane region, note=Loop between two helices. The helical transmembrane segment at 422-438 (ILPMIITGLGATLLAQF) threads the bilayer. Residues 439 to 473 (TGGKPLYSAILARTLAKQEAEQLARSKAASASENT) are Cytoplasmic-facing. Tyr445 is a binding site for chloride.

This sequence belongs to the chloride channel (TC 2.A.49) family. ClcA subfamily. Homodimer.

It localises to the cell inner membrane. It carries out the reaction 2 chloride(in) + H(+)(out) = 2 chloride(out) + H(+)(in). Functionally, proton-coupled chloride transporter. Functions as antiport system and exchanges two chloride ions for 1 proton. Probably acts as an electrical shunt for an outwardly-directed proton pump that is linked to amino acid decarboxylation, as part of the extreme acid resistance (XAR) response. This Escherichia coli O9:H4 (strain HS) protein is H(+)/Cl(-) exchange transporter ClcA.